The following is a 396-amino-acid chain: Anaerobic glycerol-3-phosphate dehydrogenase subunit C (396 aa).

2 4Fe-4S ferredoxin-type domains span residues 2 to 29 (NDTS…PGYP) and 45 to 76 (DGAL…GDII). [4Fe-4S] cluster-binding residues include cysteine 9, cysteine 12, cysteine 15, cysteine 19, cysteine 56, cysteine 59, cysteine 62, and cysteine 66.

In terms of assembly, composed of a catalytic GlpA/B dimer and of GlpC.

The protein localises to the cell inner membrane. Its pathway is polyol metabolism; glycerol degradation via glycerol kinase pathway; glycerone phosphate from sn-glycerol 3-phosphate (anaerobic route): step 1/1. Its function is as follows. Electron transfer protein; may also function as the membrane anchor for the GlpAB dimer. The polypeptide is Anaerobic glycerol-3-phosphate dehydrogenase subunit C (glpC) (Escherichia coli O157:H7).